A 254-amino-acid chain; its full sequence is Adenosylcobinamide-GDP ribazoletransferase (254 aa).

A run of 7 helical transmembrane segments spans residues 29–49 (LFWFPVVGLLLGSIQAALGYF), 50–70 (TSLLGWNELSAAFVVLGGIAL), 98–118 (IMKDPNVGSFGAIALSGMMLL), 121–141 (IAILKLVDIGAFACIAAGVLL), 170–190 (AGVVHIVVTSALTLLFLFPLL), 198–218 (LYAVVAMISAALAAALLTGLL), and 230–250 (VLGAGSEVTELFVWIAAALSA).

The protein belongs to the CobS family. Mg(2+) is required as a cofactor.

It localises to the cell inner membrane. The enzyme catalyses alpha-ribazole + adenosylcob(III)inamide-GDP = adenosylcob(III)alamin + GMP + H(+). It catalyses the reaction alpha-ribazole 5'-phosphate + adenosylcob(III)inamide-GDP = adenosylcob(III)alamin 5'-phosphate + GMP + H(+). It functions in the pathway cofactor biosynthesis; adenosylcobalamin biosynthesis; adenosylcobalamin from cob(II)yrinate a,c-diamide: step 7/7. In terms of biological role, joins adenosylcobinamide-GDP and alpha-ribazole to generate adenosylcobalamin (Ado-cobalamin). Also synthesizes adenosylcobalamin 5'-phosphate from adenosylcobinamide-GDP and alpha-ribazole 5'-phosphate. In Pelodictyon phaeoclathratiforme (strain DSM 5477 / BU-1), this protein is Adenosylcobinamide-GDP ribazoletransferase.